A 145-amino-acid chain; its full sequence is MYDKLNVALSKDLRKKYGIRSFPIVKGDVVKVVSGARKGEGGKVAEVDHHSGLVIVEGITIAKIDGKQKGFGISPEKLQITHLDLSRSERFQKIKELANIKHITIQEEPIQEEQQKTEETKQEIAPEEVEAKEAQDKQEVKENDQ.

Positions 108 to 145 (EPIQEEQQKTEETKQEIAPEEVEAKEAQDKQEVKENDQ) are disordered. A compositionally biased stretch (basic and acidic residues) spans 113–145 (EQQKTEETKQEIAPEEVEAKEAQDKQEVKENDQ).

This sequence belongs to the universal ribosomal protein uL24 family. Part of the 50S ribosomal subunit.

Its function is as follows. One of two assembly initiator proteins, it binds directly to the 5'-end of the 23S rRNA, where it nucleates assembly of the 50S subunit. Functionally, located at the polypeptide exit tunnel on the outside of the subunit. This is Large ribosomal subunit protein uL24 (rpl24) from Thermoplasma volcanium (strain ATCC 51530 / DSM 4299 / JCM 9571 / NBRC 15438 / GSS1).